The following is a 281-amino-acid chain: MNNLKVWLLMAALSAILVLIGGAIGGKSGALLFFLISLGMNLFSYYYSDKVAISMTRSRPVSEEEAPGLYDVVRRLTKRAGLPMPRLYITPSPQPNAFATGRNPAHSAVAVTEGLLRLLNQSELEGVLAHELAHIKNRDVLIGTIAAAFAGAITMISNIVQWGAFFGMGQDDEEGGGGSFIASLLLALIAPVAAMIIQLAISRSREYLADETGARMAGNSGGLANALLKLDSAARRIPMQVNPAASHLFIVNPLSGESIARLFSTHPPISERVKRLNAMAI.

Transmembrane regions (helical) follow at residues 6 to 26 and 28 to 48; these read VWLL…AIGG and SGAL…YYYS. Residue His-130 participates in Zn(2+) binding. Residue Glu-131 is part of the active site. Residue His-134 participates in Zn(2+) binding. Transmembrane regions (helical) follow at residues 140–160 and 181–201; these read VLIG…SNIV and IASL…QLAI. Glu-206 contacts Zn(2+).

The protein belongs to the peptidase M48B family. The cofactor is Zn(2+).

The protein resides in the cell membrane. This is Protease HtpX homolog from Pelotomaculum thermopropionicum (strain DSM 13744 / JCM 10971 / SI).